A 475-amino-acid polypeptide reads, in one-letter code: tRNA (guanine(37)-N(1))-methyltransferase (475 aa).

S-adenosyl-L-methionine-binding positions include histidine 219, 258 to 259 (DL), and 286 to 287 (DG). The segment at 306 to 328 (KITKQKPTSNDKKRNRKVESPTV) is disordered. Asparagine 349 serves as a coordination point for S-adenosyl-L-methionine. Polar residues predominate over residues 456–469 (NLVSQSDVSKSSDN). A disordered region spans residues 456–475 (NLVSQSDVSKSSDNILEKDT).

It belongs to the class I-like SAM-binding methyltransferase superfamily. TRM5/TYW2 family. In terms of assembly, monomer.

Its subcellular location is the mitochondrion matrix. The protein resides in the nucleus. It is found in the cytoplasm. It carries out the reaction guanosine(37) in tRNA + S-adenosyl-L-methionine = N(1)-methylguanosine(37) in tRNA + S-adenosyl-L-homocysteine + H(+). Its function is as follows. Specifically methylates the N1 position of guanosine-37 in various cytoplasmic and mitochondrial tRNAs. Methylation is not dependent on the nature of the nucleoside 5' of the target nucleoside. This is the first step in the biosynthesis of wybutosine (yW), a modified base adjacent to the anticodon of tRNAs and required for accurate decoding. The polypeptide is tRNA (guanine(37)-N(1))-methyltransferase (Batrachochytrium dendrobatidis (strain JAM81 / FGSC 10211) (Frog chytrid fungus)).